The chain runs to 311 residues: L-lactate dehydrogenase (311 aa).

NAD(+) contacts are provided by residues Val12, Asp33, Lys38, Tyr63, and 77–78; that span reads GA. 2 residues coordinate substrate: Gln80 and Arg86. NAD(+) contacts are provided by residues Ser99, 116 to 118, and Ser141; that span reads VTN. 118–121 is a substrate binding site; sequence NPVD. 146-149 is a binding site for substrate; sequence DSSR. The beta-D-fructose 1,6-bisphosphate site is built by Arg151 and His166. The active-site Proton acceptor is His173. Position 219 is a phosphotyrosine (Tyr219). Thr228 serves as a coordination point for substrate.

Belongs to the LDH/MDH superfamily. LDH family. Homotetramer.

It localises to the cytoplasm. It carries out the reaction (S)-lactate + NAD(+) = pyruvate + NADH + H(+). It functions in the pathway fermentation; pyruvate fermentation to lactate; (S)-lactate from pyruvate: step 1/1. With respect to regulation, allosterically activated by fructose 1,6-bisphosphate (FBP). Functionally, catalyzes the conversion of lactate to pyruvate. The polypeptide is L-lactate dehydrogenase (Thermoanaerobacterium saccharolyticum (strain DSM 8691 / JW/SL-YS485)).